We begin with the raw amino-acid sequence, 128 residues long: Sulfurtransferase TusD (128 aa).

Residue Cys-78 is the Cysteine persulfide intermediate of the active site.

This sequence belongs to the DsrE/TusD family. Heterohexamer, formed by a dimer of trimers. The hexameric TusBCD complex contains 2 copies each of TusB, TusC and TusD. The TusBCD complex interacts with TusE.

The protein resides in the cytoplasm. Part of a sulfur-relay system required for 2-thiolation of 5-methylaminomethyl-2-thiouridine (mnm(5)s(2)U) at tRNA wobble positions. Accepts sulfur from TusA and transfers it in turn to TusE. The polypeptide is Sulfurtransferase TusD (Escherichia coli (strain K12 / MC4100 / BW2952)).